Consider the following 156-residue polypeptide: D-aminoacyl-tRNA deacylase (156 aa).

The short motif at 142-143 is the Gly-cisPro motif, important for rejection of L-amino acids element; that stretch reads GP.

This sequence belongs to the DTD family. Homodimer.

It is found in the cytoplasm. The enzyme catalyses glycyl-tRNA(Ala) + H2O = tRNA(Ala) + glycine + H(+). The catalysed reaction is a D-aminoacyl-tRNA + H2O = a tRNA + a D-alpha-amino acid + H(+). Functionally, an aminoacyl-tRNA editing enzyme that deacylates mischarged D-aminoacyl-tRNAs. Also deacylates mischarged glycyl-tRNA(Ala), protecting cells against glycine mischarging by AlaRS. Acts via tRNA-based rather than protein-based catalysis; rejects L-amino acids rather than detecting D-amino acids in the active site. By recycling D-aminoacyl-tRNA to D-amino acids and free tRNA molecules, this enzyme counteracts the toxicity associated with the formation of D-aminoacyl-tRNA entities in vivo and helps enforce protein L-homochirality. The sequence is that of D-aminoacyl-tRNA deacylase from Cupriavidus metallidurans (strain ATCC 43123 / DSM 2839 / NBRC 102507 / CH34) (Ralstonia metallidurans).